A 59-amino-acid chain; its full sequence is Large ribosomal subunit protein bL32 (59 aa).

A disordered region spans residues 1-22 (MAVQQNKKSPSKRGMHRSHDFL).

It belongs to the bacterial ribosomal protein bL32 family.

This is Large ribosomal subunit protein bL32 from Thiobacillus denitrificans (strain ATCC 25259 / T1).